The following is a 283-amino-acid chain: ATP synthase gamma chain (283 aa).

Belongs to the ATPase gamma chain family. In terms of assembly, F-type ATPases have 2 components, CF(1) - the catalytic core - and CF(0) - the membrane proton channel. CF(1) has five subunits: alpha(3), beta(3), gamma(1), delta(1), epsilon(1). CF(0) has three main subunits: a, b and c.

The protein localises to the cell membrane. In terms of biological role, produces ATP from ADP in the presence of a proton gradient across the membrane. The gamma chain is believed to be important in regulating ATPase activity and the flow of protons through the CF(0) complex. This Clostridium botulinum (strain Eklund 17B / Type B) protein is ATP synthase gamma chain.